We begin with the raw amino-acid sequence, 123 residues long: Small ribosomal subunit protein bS16 (123 aa).

It belongs to the bacterial ribosomal protein bS16 family.

This Treponema pallidum (strain Nichols) protein is Small ribosomal subunit protein bS16.